The primary structure comprises 319 residues: Acetyl esterase (319 aa).

The short motif at 91–93 is the Involved in the stabilization of the negatively charged intermediate by the formation of the oxyanion hole element; sequence HGG. Active-site residues include S165, D262, and H292.

This sequence belongs to the 'GDXG' lipolytic enzyme family. In terms of assembly, homodimer. Interacts with MalT and MelA.

The protein localises to the cytoplasm. In terms of biological role, displays esterase activity towards short chain fatty esters (acyl chain length of up to 8 carbons). Able to hydrolyze triacetylglycerol (triacetin) and tributyrylglycerol (tributyrin), but not trioleylglycerol (triolein) or cholesterol oleate. Negatively regulates MalT activity by antagonizing maltotriose binding. Inhibits MelA galactosidase activity. This is Acetyl esterase from Escherichia coli O7:K1 (strain IAI39 / ExPEC).